An 80-amino-acid polypeptide reads, in one-letter code: Large ribosomal subunit protein bL31B (80 aa).

It belongs to the bacterial ribosomal protein bL31 family. Type B subfamily. In terms of assembly, part of the 50S ribosomal subunit.

The chain is Large ribosomal subunit protein bL31B from Xylella fastidiosa (strain 9a5c).